Here is a 267-residue protein sequence, read N- to C-terminus: NAD kinase 1 (267 aa).

Asp45 (proton acceptor) is an active-site residue. NAD(+) contacts are provided by residues 45–46, 122–123, Arg149, Asp151, and Ala186; these read DG and NE.

This sequence belongs to the NAD kinase family. It depends on a divalent metal cation as a cofactor.

The protein localises to the cytoplasm. It catalyses the reaction NAD(+) + ATP = ADP + NADP(+) + H(+). Involved in the regulation of the intracellular balance of NAD and NADP, and is a key enzyme in the biosynthesis of NADP. Catalyzes specifically the phosphorylation on 2'-hydroxyl of the adenosine moiety of NAD to yield NADP. This is NAD kinase 1 from Oceanobacillus iheyensis (strain DSM 14371 / CIP 107618 / JCM 11309 / KCTC 3954 / HTE831).